The following is a 250-amino-acid chain: Nuclear transcription factor Y subunit C-4 (250 aa).

A compositionally biased stretch (low complexity) spans 1–10; sequence MDNNNNNNNQ. Disordered regions lie at residues 1–35 and 209–250; these read MDNN…PSGS and GVYA…DSQG. Positions 214-225 are enriched in polar residues; the sequence is PPSQAWQSVWQN. The span at 227 to 242 shows a compositional bias: gly residues; that stretch reads AGGGDDVSYGSGGSSG.

The protein belongs to the NFYC/HAP5 subunit family. Heterotrimeric transcription factor composed of three components, NF-YA, NF-YB and NF-YC. NF-YB and NF-YC must interact and dimerize for NF-YA association and DNA binding. In terms of tissue distribution, ubiquitous. Present in etiolated seedlings.

It is found in the nucleus. In terms of biological role, stimulates the transcription of various genes by recognizing and binding to a CCAAT motif in promoters. Involved in the abscisic acid (ABA) signaling pathway. In Arabidopsis thaliana (Mouse-ear cress), this protein is Nuclear transcription factor Y subunit C-4 (NFYC4).